Consider the following 74-residue polypeptide: Mu-conotoxin-like T3.1 (74 aa).

The first 19 residues, 1 to 19 (MSKLGVLLTICLLLFPLTA), serve as a signal peptide directing secretion. A propeptide spanning residues 20-74 (LPMDGDEPADRPAERMQDNISSEQHPLFEERHGCCKGPEGCSSRECRPQHCCGRR) is cleaved from the precursor. 3 cysteine pairs are disulfide-bonded: Cys53/Cys65, Cys54/Cys70, and Cys60/Cys71. Pro57 carries the 4-hydroxyproline modification. 2 positions are modified to 4-carboxyglutamate: Glu58 and Glu64. 4-hydroxyproline is present on Pro67. At Cys71 the chain carries Cysteine amide.

The protein belongs to the conotoxin M superfamily. In terms of tissue distribution, expressed by the venom duct.

It is found in the secreted. Its function is as follows. Mu-conotoxins block voltage-gated sodium channels (Nav). In vitro, this synthetic peptide displays a low blocking effect in mouse extensor digitorum longus muscles (IC(50)=616 nM). The sequence is that of Mu-conotoxin-like T3.1 from Conus tulipa (Fish-hunting cone snail).